Here is a 202-residue protein sequence, read N- to C-terminus: Recombination protein RecR (202 aa).

Residues 58–73 (CANCGNLTDKKLCDIC) form a C4-type zinc finger. The region spanning 81–178 (SVITVVEDSM…KVSRIAMGVP (98 aa)) is the Toprim domain.

It belongs to the RecR family.

Its function is as follows. May play a role in DNA repair. It seems to be involved in an RecBC-independent recombinational process of DNA repair. It may act with RecF and RecO. The polypeptide is Recombination protein RecR (Finegoldia magna (strain ATCC 29328 / DSM 20472 / WAL 2508) (Peptostreptococcus magnus)).